Consider the following 157-residue polypeptide: MAKKPETLSRIADNKKAAFNYFFEERHEAGMVLHGWEVKALREGKVQLTDGYVVIREGELYLIGCQINPLKTASTHVSPDAVRTKKLLLHKDEIKRLTAKVEQKGYTLVPLNLHWTNGRAKCEIALAKGKAEHDKRDTIKEREGKREVERAMKSRHR.

Residues 132 to 157 (EHDKRDTIKEREGKREVERAMKSRHR) form a disordered region.

Belongs to the SmpB family.

It is found in the cytoplasm. Its function is as follows. Required for rescue of stalled ribosomes mediated by trans-translation. Binds to transfer-messenger RNA (tmRNA), required for stable association of tmRNA with ribosomes. tmRNA and SmpB together mimic tRNA shape, replacing the anticodon stem-loop with SmpB. tmRNA is encoded by the ssrA gene; the 2 termini fold to resemble tRNA(Ala) and it encodes a 'tag peptide', a short internal open reading frame. During trans-translation Ala-aminoacylated tmRNA acts like a tRNA, entering the A-site of stalled ribosomes, displacing the stalled mRNA. The ribosome then switches to translate the ORF on the tmRNA; the nascent peptide is terminated with the 'tag peptide' encoded by the tmRNA and targeted for degradation. The ribosome is freed to recommence translation, which seems to be the essential function of trans-translation. This Paracidovorax citrulli (strain AAC00-1) (Acidovorax citrulli) protein is SsrA-binding protein.